The sequence spans 263 residues: ATP synthase subunit delta (263 aa).

Belongs to the ATPase delta chain family. F-type ATPases have 2 components, F(1) - the catalytic core - and F(0) - the membrane proton channel. F(1) has five subunits: alpha(3), beta(3), gamma(1), delta(1), epsilon(1). F(0) has three main subunits: a(1), b(2) and c(10-14). The alpha and beta chains form an alternating ring which encloses part of the gamma chain. F(1) is attached to F(0) by a central stalk formed by the gamma and epsilon chains, while a peripheral stalk is formed by the delta and b chains.

The protein resides in the cell membrane. Its function is as follows. F(1)F(0) ATP synthase produces ATP from ADP in the presence of a proton or sodium gradient. F-type ATPases consist of two structural domains, F(1) containing the extramembraneous catalytic core and F(0) containing the membrane proton channel, linked together by a central stalk and a peripheral stalk. During catalysis, ATP synthesis in the catalytic domain of F(1) is coupled via a rotary mechanism of the central stalk subunits to proton translocation. In terms of biological role, this protein is part of the stalk that links CF(0) to CF(1). It either transmits conformational changes from CF(0) to CF(1) or is implicated in proton conduction. The polypeptide is ATP synthase subunit delta (Leifsonia xyli subsp. xyli (strain CTCB07)).